The sequence spans 96 residues: Co-chaperonin GroES (96 aa).

Belongs to the GroES chaperonin family. Heptamer of 7 subunits arranged in a ring. Interacts with the chaperonin GroEL.

Its subcellular location is the cytoplasm. In terms of biological role, together with the chaperonin GroEL, plays an essential role in assisting protein folding. The GroEL-GroES system forms a nano-cage that allows encapsulation of the non-native substrate proteins and provides a physical environment optimized to promote and accelerate protein folding. GroES binds to the apical surface of the GroEL ring, thereby capping the opening of the GroEL channel. The chain is Co-chaperonin GroES from Trichlorobacter lovleyi (strain ATCC BAA-1151 / DSM 17278 / SZ) (Geobacter lovleyi).